We begin with the raw amino-acid sequence, 1490 residues long: Leucine-rich repeat-containing protein 7 (1490 aa).

17 LRR repeats span residues 23–44 (IISV…VFNF), 47–68 (TLEE…LFNC), 70–91 (ALRK…IASL), 93–114 (NLKE…IKCC), 116–137 (CLTI…FTQL), 139–161 (NLTQ…GRLV), 162–183 (KLRI…MHKL), 185–206 (QLER…LDQI), 208–229 (NLRE…IGKL), 231–253 (MLVY…SGCE), 254–275 (ALED…IGLL), 277–298 (KLTT…IGNL), 300–321 (LLEE…IGYL), 323–344 (SLRT…IGSC), 346–367 (NVTV…IGQM), 369–391 (RLRV…TKLK), and 392–413 (ELAA…QTEA). Residues Ser439, Ser441, and Ser443 each carry the phosphoserine modification. Residues 663–676 (KKESTDESEVDKTH) are compositionally biased toward basic and acidic residues. 3 disordered regions span residues 663–709 (KKES…VGSL), 775–808 (DNTG…HGRR), and 822–899 (ELEQ…YHDP). Residues 677 to 686 (CLNNSVSSGT) show a composition bias toward polar residues. Low complexity predominate over residues 687 to 700 (YSDYSPSQASSASS). Residues 787-799 (ENANNNPLLSSKA) are compositionally biased toward polar residues. The residue at position 831 (Thr831) is a Phosphothreonine. Ser850 is subject to Phosphoserine. Residues 859–871 (PSKLETTPTTSPL) are compositionally biased toward low complexity. Thr865 is subject to Phosphothreonine. Ser869 is modified (phosphoserine). Over residues 872–882 (PERKDHMKEPT) the composition is skewed to basic and acidic residues. A phosphoserine mark is found at Ser947, Ser949, and Ser1118. The residue at position 1149 (Arg1149) is an Omega-N-methylarginine. Residues 1194–1217 (LTQRRPLSARSYSTESYGASQTRP) show a composition bias toward polar residues. Positions 1194-1218 (LTQRRPLSARSYSTESYGASQTRPV) are disordered. Ser1233 carries the phosphoserine modification. Disordered stretches follow at residues 1238–1265 (GNYG…SCGK) and 1282–1312 (RLDR…PYPL). The segment covering 1243-1263 (KTSDNSDIKTRPTPVKGEESC) has biased composition (basic and acidic residues). Residues 1286–1307 (TPSQQSNILDNGQEDVSPSGQW) are compositionally biased toward polar residues. A phosphoserine mark is found at Ser1288 and Ser1392. The region spanning 1398–1488 (EQFCVRIEKN…TVDLVIQREL (91 aa)) is the PDZ domain.

It belongs to the LAP (LRR and PDZ) protein family. As to quaternary structure, interacts with CNKSR2 and DLG4. Interacts with CTNND2/Catenin delta-2. Forms a complex with N-cadherin through CTNND2. Interacts with CAMK2A. O-glycosylated and phosphorylated. As to expression, brain-specific. Highly concentrated at synapses.

It localises to the cytoplasm. It is found in the postsynaptic density. Functionally, required for normal synaptic spine architecture and function. Necessary for DISC1 and GRM5 localization to postsynaptic density complexes and for both N-methyl D-aspartate receptor-dependent and metabotropic glutamate receptor-dependent long term depression. The chain is Leucine-rich repeat-containing protein 7 (Lrrc7) from Rattus norvegicus (Rat).